The sequence spans 83 residues: Kappa-ctenitoxin-Pn1a (83 aa).

The first 21 residues, 1 to 21, serve as a signal peptide directing secretion; the sequence is MWFKIQVLVLAITLITLGIQA. The propeptide occupies 22 to 37; that stretch reads EPNSSPNNPLIVEEDR. Disulfide bonds link C40–C55, C47–C60, C54–C71, and C62–C69. Residues 78-83 constitute a propeptide that is removed on maturation; the sequence is LFGFGK.

Belongs to the neurotoxin 02 (plectoxin) family. In terms of tissue distribution, expressed by the venom gland.

The protein localises to the secreted. Antagonist of L-type calcium channels (Cav1/CACNA1). In GH3 neuroendocrinal cell line, it reversibly inhibits the A-type potassium current but does not block other potassium currents or calcium channels. Shows an important acetylcholine-mediated antiarrhythmogenic effect in isolated hearts. In vivo, causes paralysis in the posterior limbs and gradual decreases in movement and aggression during 24 hours at dose levels of 5 ug per mouse. This chain is Kappa-ctenitoxin-Pn1a, found in Phoneutria nigriventer (Brazilian armed spider).